Consider the following 139-residue polypeptide: 6,7-dimethyl-8-ribityllumazine synthase (139 aa).

5-amino-6-(D-ribitylamino)uracil contacts are provided by residues Phe11, 42 to 44 (ALE), and 66 to 68 (VVI). 71-72 (ET) is a (2S)-2-hydroxy-3-oxobutyl phosphate binding site. His74 serves as the catalytic Proton donor. Asn98 contacts 5-amino-6-(D-ribitylamino)uracil. Arg112 provides a ligand contact to (2S)-2-hydroxy-3-oxobutyl phosphate.

The protein belongs to the DMRL synthase family.

It catalyses the reaction (2S)-2-hydroxy-3-oxobutyl phosphate + 5-amino-6-(D-ribitylamino)uracil = 6,7-dimethyl-8-(1-D-ribityl)lumazine + phosphate + 2 H2O + H(+). It participates in cofactor biosynthesis; riboflavin biosynthesis; riboflavin from 2-hydroxy-3-oxobutyl phosphate and 5-amino-6-(D-ribitylamino)uracil: step 1/2. Its function is as follows. Catalyzes the formation of 6,7-dimethyl-8-ribityllumazine by condensation of 5-amino-6-(D-ribitylamino)uracil with 3,4-dihydroxy-2-butanone 4-phosphate. This is the penultimate step in the biosynthesis of riboflavin. The sequence is that of 6,7-dimethyl-8-ribityllumazine synthase from Zymomonas mobilis subsp. mobilis (strain ATCC 31821 / ZM4 / CP4).